A 102-amino-acid polypeptide reads, in one-letter code: Small ribosomal subunit protein uS10 (102 aa).

It belongs to the universal ribosomal protein uS10 family. In terms of assembly, part of the 30S ribosomal subunit.

Its function is as follows. Involved in the binding of tRNA to the ribosomes. The polypeptide is Small ribosomal subunit protein uS10 (Methylobacterium nodulans (strain LMG 21967 / CNCM I-2342 / ORS 2060)).